Consider the following 408-residue polypeptide: Acetate kinase (408 aa).

Asparagine 7 contributes to the Mg(2+) binding site. Lysine 14 provides a ligand contact to ATP. A substrate-binding site is contributed by arginine 91. Residue aspartate 148 is the Proton donor/acceptor of the active site. Residues 208-212 (HLGNG) and 283-285 (DLR) contribute to the ATP site. Glutamate 388 is a Mg(2+) binding site.

It belongs to the acetokinase family. Homodimer. It depends on Mg(2+) as a cofactor. The cofactor is Mn(2+).

Its subcellular location is the cytoplasm. It catalyses the reaction acetate + ATP = acetyl phosphate + ADP. It functions in the pathway metabolic intermediate biosynthesis; acetyl-CoA biosynthesis; acetyl-CoA from acetate: step 1/2. Functionally, catalyzes the formation of acetyl phosphate from acetate and ATP. Can also catalyze the reverse reaction. The protein is Acetate kinase of Borrelia hermsii (strain HS1 / DAH).